Consider the following 427-residue polypeptide: 3-phosphoshikimate 1-carboxyvinyltransferase (427 aa).

3-phosphoshikimate is bound by residues K22, S23, and R27. Residue K22 coordinates phosphoenolpyruvate. The phosphoenolpyruvate site is built by G96 and R124. Positions 169, 170, 171, 197, 313, 336, and 340 each coordinate 3-phosphoshikimate. Q171 contributes to the phosphoenolpyruvate binding site. The active-site Proton acceptor is the D313. Phosphoenolpyruvate-binding residues include R344, R386, and K411.

It belongs to the EPSP synthase family. Monomer.

It localises to the cytoplasm. It carries out the reaction 3-phosphoshikimate + phosphoenolpyruvate = 5-O-(1-carboxyvinyl)-3-phosphoshikimate + phosphate. Its pathway is metabolic intermediate biosynthesis; chorismate biosynthesis; chorismate from D-erythrose 4-phosphate and phosphoenolpyruvate: step 6/7. Its function is as follows. Catalyzes the transfer of the enolpyruvyl moiety of phosphoenolpyruvate (PEP) to the 5-hydroxyl of shikimate-3-phosphate (S3P) to produce enolpyruvyl shikimate-3-phosphate and inorganic phosphate. The sequence is that of 3-phosphoshikimate 1-carboxyvinyltransferase from Salmonella paratyphi A (strain ATCC 9150 / SARB42).